The sequence spans 213 residues: MFNQSYLNVYFICGTSDVPSHRTIHEVLEAALKAGITLFQFREKGESALKGNDKLVLAKELQHLCHQYDVPFIVNDDVSLAKEINADGIHVGQDDAKVKEIAQYFTDKIIGFSISDLDEYAKSDLTHVDYIGVGPIYPTPSKHDAHTPVGPEMIATFKEMNPQLPIVAIGGINTSNVAPIVEAGANGISVISAISKSENIEKTVNRFKDFFNN.

4-amino-2-methyl-5-(diphosphooxymethyl)pyrimidine is bound by residues 40–44 and N75; that span reads QFREK. D76 and D95 together coordinate Mg(2+). S113 is a 4-amino-2-methyl-5-(diphosphooxymethyl)pyrimidine binding site. 139–141 lines the 2-[(2R,5Z)-2-carboxy-4-methylthiazol-5(2H)-ylidene]ethyl phosphate pocket; it reads TPS. Position 142 (K142) interacts with 4-amino-2-methyl-5-(diphosphooxymethyl)pyrimidine. 2-[(2R,5Z)-2-carboxy-4-methylthiazol-5(2H)-ylidene]ethyl phosphate-binding positions include G171 and 191–192; that span reads IS.

The protein belongs to the thiamine-phosphate synthase family. The cofactor is Mg(2+).

The enzyme catalyses 2-[(2R,5Z)-2-carboxy-4-methylthiazol-5(2H)-ylidene]ethyl phosphate + 4-amino-2-methyl-5-(diphosphooxymethyl)pyrimidine + 2 H(+) = thiamine phosphate + CO2 + diphosphate. The catalysed reaction is 2-(2-carboxy-4-methylthiazol-5-yl)ethyl phosphate + 4-amino-2-methyl-5-(diphosphooxymethyl)pyrimidine + 2 H(+) = thiamine phosphate + CO2 + diphosphate. It catalyses the reaction 4-methyl-5-(2-phosphooxyethyl)-thiazole + 4-amino-2-methyl-5-(diphosphooxymethyl)pyrimidine + H(+) = thiamine phosphate + diphosphate. The protein operates within cofactor biosynthesis; thiamine diphosphate biosynthesis; thiamine phosphate from 4-amino-2-methyl-5-diphosphomethylpyrimidine and 4-methyl-5-(2-phosphoethyl)-thiazole: step 1/1. Functionally, condenses 4-methyl-5-(beta-hydroxyethyl)thiazole monophosphate (THZ-P) and 2-methyl-4-amino-5-hydroxymethyl pyrimidine pyrophosphate (HMP-PP) to form thiamine monophosphate (TMP). This Staphylococcus aureus (strain MRSA252) protein is Thiamine-phosphate synthase.